Here is an 84-residue protein sequence, read N- to C-terminus: Kunitz-type serine protease inhibitor C3 (84 aa).

The N-terminal stretch at 1–24 is a signal peptide; sequence MSSGGLLLLLGLLTLWAELTPISG. A BPTI/Kunitz inhibitor domain is found at 31–81; that stretch reads CYLPADPGECMAYIRSFYYDSESKKCKEFIYGGCHGNANNFPTRDKCRQTC. 3 disulfides stabilise this stretch: Cys-31–Cys-81, Cys-40–Cys-64, and Cys-56–Cys-77.

Belongs to the venom Kunitz-type family. As to expression, expressed by the venom gland.

It localises to the secreted. Its function is as follows. Serine protease inhibitor. This chain is Kunitz-type serine protease inhibitor C3, found in Daboia siamensis (Eastern Russel's viper).